A 97-amino-acid chain; its full sequence is HssA/B-like protein 44 (97 aa).

2 disordered regions span residues 1–22 and 62–97; these read MTLFSSISSISSSISSSKSSIA and ASTSSGGRGGRPGRGHGGPHGHGRGGSGSGSSCGCN. Over residues 72–84 the composition is skewed to basic residues; it reads RPGRGHGGPHGHG. Residues 85–97 are compositionally biased toward gly residues; sequence RGGSGSGSSCGCN.

It belongs to the hssA/B family.

The sequence is that of HssA/B-like protein 44 (hssl44) from Dictyostelium discoideum (Social amoeba).